Here is a 303-residue protein sequence, read N- to C-terminus: Glycine--tRNA ligase alpha subunit (303 aa).

Belongs to the class-II aminoacyl-tRNA synthetase family. In terms of assembly, tetramer of two alpha and two beta subunits.

It localises to the cytoplasm. The enzyme catalyses tRNA(Gly) + glycine + ATP = glycyl-tRNA(Gly) + AMP + diphosphate. In Stenotrophomonas maltophilia (strain R551-3), this protein is Glycine--tRNA ligase alpha subunit.